A 163-amino-acid chain; its full sequence is Protein GOLVEN 3 (163 aa).

The signal sequence occupies residues 1–20 (MMRFTIIVIAFLLIIQSLEE). Positions 21 to 141 (EHILVYAHEG…MEKLARLLRD (121 aa)) are excised as a propeptide. Y143 bears the Sulfotyrosine mark. The disordered stretch occupies residues 144-163 (PIYSKPRRKPPVNNRAPDKF). P154 is modified (hydroxyproline). A propeptide spanning residues 158-163 (RAPDKF) is cleaved from the precursor.

Belongs to the RGF family. In terms of assembly, binds to LRR receptor-like serine/threonine-protein kinases RGI1, RGI2 and RGI3 to trigger their dimerization with SERK proteins and subsequent signaling. Expressed in roots, specifically in the root apical meristem (RAM).

It is found in the secreted. Its function is as follows. Signaling peptide (root growth factor) required during root gravitropism in a PIN2-traffic dependent manner, thus influencing the formation of auxin gradients. Maintains the postembryonic root stem cell niche. This chain is Protein GOLVEN 3, found in Arabidopsis thaliana (Mouse-ear cress).